A 20-amino-acid chain; its full sequence is Brevinin-1DYa (20 aa).

An intrachain disulfide couples Cys14 to Cys20.

In terms of tissue distribution, expressed by the skin glands.

It is found in the secreted. Antimicrobial peptide. Has low activity against the Gram-positive bacterium S.aureus and the Gram-negative bacterium E.coli (MIC&lt;15 uM). Has a strong hemolytic activity. The protein is Brevinin-1DYa of Rana dybowskii (Dybovsky's frog).